Reading from the N-terminus, the 494-residue chain is Probable cytochrome P450 518A1 (494 aa).

The chain crosses the membrane as a helical span at residues 1 to 21; that stretch reads MSILIILIISIIFYLIFDFLY. C438 lines the heme pocket.

It belongs to the cytochrome P450 family. Requires heme as cofactor.

It localises to the membrane. This is Probable cytochrome P450 518A1 (cyp518A1) from Dictyostelium discoideum (Social amoeba).